The primary structure comprises 458 residues: Argininosuccinate lyase (458 aa).

It belongs to the lyase 1 family. Argininosuccinate lyase subfamily.

The protein resides in the cytoplasm. The enzyme catalyses 2-(N(omega)-L-arginino)succinate = fumarate + L-arginine. It participates in amino-acid biosynthesis; L-arginine biosynthesis; L-arginine from L-ornithine and carbamoyl phosphate: step 3/3. The chain is Argininosuccinate lyase from Glaesserella parasuis serovar 5 (strain SH0165) (Haemophilus parasuis).